A 363-amino-acid chain; its full sequence is Anhydro-N-acetylmuramic acid kinase (363 aa).

9–16 (GTSLDGID) provides a ligand contact to ATP.

The protein belongs to the anhydro-N-acetylmuramic acid kinase family.

The enzyme catalyses 1,6-anhydro-N-acetyl-beta-muramate + ATP + H2O = N-acetyl-D-muramate 6-phosphate + ADP + H(+). It functions in the pathway amino-sugar metabolism; 1,6-anhydro-N-acetylmuramate degradation. The protein operates within cell wall biogenesis; peptidoglycan recycling. In terms of biological role, catalyzes the specific phosphorylation of 1,6-anhydro-N-acetylmuramic acid (anhMurNAc) with the simultaneous cleavage of the 1,6-anhydro ring, generating MurNAc-6-P. Is required for the utilization of anhMurNAc either imported from the medium or derived from its own cell wall murein, and thus plays a role in cell wall recycling. The protein is Anhydro-N-acetylmuramic acid kinase of Nitrosomonas europaea (strain ATCC 19718 / CIP 103999 / KCTC 2705 / NBRC 14298).